The primary structure comprises 89 residues: Translation initiation factor IF-1 1 (89 aa).

The 73-residue stretch at 1–73 folds into the S1-like domain; sequence MSNKEQLIEM…TKGRITFRHL (73 aa).

Belongs to the IF-1 family. Component of the 30S ribosomal translation pre-initiation complex which assembles on the 30S ribosome in the order IF-2 and IF-3, IF-1 and N-formylmethionyl-tRNA(fMet); mRNA recruitment can occur at any time during PIC assembly.

It localises to the cytoplasm. Its function is as follows. One of the essential components for the initiation of protein synthesis. Stabilizes the binding of IF-2 and IF-3 on the 30S subunit to which N-formylmethionyl-tRNA(fMet) subsequently binds. Helps modulate mRNA selection, yielding the 30S pre-initiation complex (PIC). Upon addition of the 50S ribosomal subunit IF-1, IF-2 and IF-3 are released leaving the mature 70S translation initiation complex. The protein is Translation initiation factor IF-1 1 of Acidovorax sp. (strain JS42).